A 549-amino-acid chain; its full sequence is Solute carrier family 22 member 6 (549 aa).

The Cytoplasmic segment spans residues 1–23; it reads MAFNDLLLQLGGVGRFQKIQVTL. A helical membrane pass occupies residues 24-44; the sequence is VILPLILLASHNTLQNFTAAI. Topologically, residues 45–135 are extracellular; it reads PTHHCRPPAD…LVCSHRALRQ (91 aa). Residues Asn-56, Asn-92, and Asn-113 are each glycosylated (N-linked (GlcNAc...) asparagine). A helical transmembrane segment spans residues 136 to 156; it reads LAQSLYMMGVLLGAMTFGCLA. At 157-164 the chain is on the cytoplasmic side; that stretch reads DRLGRRKV. Residues 165-185 traverse the membrane as a helical segment; the sequence is LIFNYLQTAVSGTCAAFAPNF. Residues 186–195 lie on the Extracellular side of the membrane; it reads PAYCAFRFLS. The helical transmembrane segment at 196 to 216 threads the bilayer; it reads GMSTAGVVLNCMTLNVEWMPI. Residues 217–224 are Cytoplasmic-facing; it reads HTRAYVGT. The helical transmembrane segment at 225–245 threads the bilayer; sequence LTGYVYSLGQFLLAGMAYAVP. The Extracellular portion of the chain corresponds to 246 to 248; that stretch reads HWR. The chain crosses the membrane as a helical span at residues 249–269; it reads YLQLLVSAPFFAFFIYSWFFI. Residues 270–337 lie on the Cytoplasmic side of the membrane; sequence ESARWYASSG…ELIRCPALRR (68 aa). The helical transmembrane segment at 338 to 358 threads the bilayer; sequence LFLCLSMLWFATSFAYYGLVM. The Extracellular segment spans residues 359–368; it reads DLQGFGVSIY. A helical transmembrane segment spans residues 369–389; that stretch reads LIQVIFGAVDLPAKLVSFLVI. Residues 390 to 395 lie on the Cytoplasmic side of the membrane; sequence NNVGRR. The chain crosses the membrane as a helical span at residues 396–416; the sequence is PAQMASLLLAGICILINGVVP. The Extracellular segment spans residues 417-425; it reads KDKSIVRTS. A helical membrane pass occupies residues 426-446; the sequence is LAVLGKGCLASSFNCIFLYTG. Over 447–456 the chain is Cytoplasmic; sequence EVYPTMIRQT. Residues 457-477 traverse the membrane as a helical segment; sequence GLGMGSTLARVGSIVSPLVSM. Residues 478 to 484 are Extracellular-facing; that stretch reads TAELYPS. The chain crosses the membrane as a helical span at residues 485-505; the sequence is VPLFIYGAVPVAASAAIALLP. Residues 506-549 lie on the Cytoplasmic side of the membrane; that stretch reads ETLGQPLPDTVQDVENRRRGKTRKQQEELQKQMVPLQASAQVKN. A disordered region spans residues 521–549; the sequence is NRRRGKTRKQQEELQKQMVPLQASAQVKN.

The protein belongs to the major facilitator (TC 2.A.1) superfamily. Organic cation transporter (TC 2.A.1.19) family. Post-translationally, glycosylated. Glycosylation is necessary for proper targeting of the transporter to the plasma membrane.

Its subcellular location is the basolateral cell membrane. The protein localises to the basal cell membrane. The enzyme catalyses (6R)-L-erythro-5,6,7,8-tetrahydrobiopterin(out) + a dicarboxylate(in) = (6R)-L-erythro-5,6,7,8-tetrahydrobiopterin(in) + a dicarboxylate(out). It catalyses the reaction L-erythro-7,8-dihydrobiopterin(out) + a dicarboxylate(in) = L-erythro-7,8-dihydrobiopterin(in) + a dicarboxylate(out). It carries out the reaction L-sepiapterin(out) + a dicarboxylate(in) = L-sepiapterin(in) + a dicarboxylate(out). The catalysed reaction is prostaglandin F2alpha(out) + a dicarboxylate(in) = prostaglandin F2alpha(in) + a dicarboxylate(out). The enzyme catalyses prostaglandin E2(out) + a dicarboxylate(in) = prostaglandin E2(in) + a dicarboxylate(out). It catalyses the reaction 3',5'-cyclic AMP(out) + a dicarboxylate(in) = 3',5'-cyclic AMP(in) + a dicarboxylate(out). It carries out the reaction 3',5'-cyclic GMP(out) + a dicarboxylate(in) = 3',5'-cyclic GMP(in) + a dicarboxylate(out). The catalysed reaction is urate(out) + a dicarboxylate(in) = urate(in) + a dicarboxylate(out). The enzyme catalyses kynurenate(out) + glutarate(in) = kynurenate(in) + glutarate(out). It catalyses the reaction (indol-3-yl)acetate(out) + a dicarboxylate(in) = (indol-3-yl)acetate(in) + a dicarboxylate(out). It carries out the reaction indoxyl sulfate(out) + a dicarboxylate(in) = indoxyl sulfate(in) + a dicarboxylate(out). The catalysed reaction is N-benzoylglycine(out) + a dicarboxylate(in) = N-benzoylglycine(in) + a dicarboxylate(out). The enzyme catalyses 3-carboxy-4-methyl-5-propyl-2-furanpropanoate(out) + a dicarboxylate(in) = 3-carboxy-4-methyl-5-propyl-2-furanpropanoate(in) + a dicarboxylate(out). Its function is as follows. Secondary active transporter that functions as a Na(+)-independent organic anion (OA)/dicarboxylate antiporter where the uptake of one molecule of OA into the cell is coupled with an efflux of one molecule of intracellular dicarboxylate such as 2-oxoglutarate or glutarate. Mediates the uptake of OA across the basolateral side of proximal tubule epithelial cells, thereby contributing to the renal elimination of endogenous OA from the systemic circulation into the urine. Functions as a biopterin transporters involved in the uptake and the secretion of coenzymes tetrahydrobiopterin (BH4), dihydrobiopterin (BH2) and sepiapterin to urine, thereby determining baseline levels of blood biopterins. Transports prostaglandin E2 (PGE2) and prostaglandin F2-alpha (PGF2-alpha) and may contribute to their renal excretion. Also mediates the uptake of cyclic nucleotides such as cAMP and cGMP. Involved in the transport of neuroactive tryptophan metabolites kynurenate (KYNA) and xanthurenate (XA) and may contribute to their secretion from the brain. May transport glutamate. Also involved in the disposition of uremic toxins and potentially toxic xenobiotics by the renal organic anion secretory pathway, helping reduce their undesired toxicological effects on the body. Uremic toxins include the indoxyl sulfate (IS), hippurate/N-benzoylglycine (HA), indole acetate (IA), 3-carboxy-4- methyl-5-propyl-2-furanpropionate (CMPF) and urate. Xenobiotics include the mycotoxin ochratoxin (OTA). May also contribute to the transport of organic compounds in testes across the blood-testis-barrier. This is Solute carrier family 22 member 6 from Bos taurus (Bovine).